The following is a 344-amino-acid chain: Heat-inducible transcription repressor HrcA (344 aa).

This sequence belongs to the HrcA family.

Negative regulator of class I heat shock genes (grpE-dnaK-dnaJ and groELS operons). Prevents heat-shock induction of these operons. The protein is Heat-inducible transcription repressor HrcA of Geobacillus stearothermophilus (Bacillus stearothermophilus).